A 337-amino-acid polypeptide reads, in one-letter code: Heme A synthase (337 aa).

The next 5 helical transmembrane spans lie at 6 to 26, 93 to 113, 118 to 138, 154 to 174, and 192 to 212; these read ITKW…IGGI, GRIT…KDVI, ILPY…GWYM, LAFH…QLIK, and LIFS…GAMV. Heme is bound at residue H256. 3 consecutive transmembrane segments (helical) span residues 258-278, 285-305, and 308-328; these read LGGY…LKIE, IAYF…ITLL, and VPII…SIII. A heme-binding site is contributed by H316.

The protein belongs to the COX15/CtaA family. Type 2 subfamily. Interacts with CtaB. Heme b serves as cofactor.

It localises to the cell membrane. It carries out the reaction Fe(II)-heme o + 2 A + H2O = Fe(II)-heme a + 2 AH2. It participates in porphyrin-containing compound metabolism; heme A biosynthesis; heme A from heme O: step 1/1. In terms of biological role, catalyzes the conversion of heme O to heme A by two successive hydroxylations of the methyl group at C8. The first hydroxylation forms heme I, the second hydroxylation results in an unstable dihydroxymethyl group, which spontaneously dehydrates, resulting in the formyl group of heme A. This is Heme A synthase from Rickettsia felis (strain ATCC VR-1525 / URRWXCal2) (Rickettsia azadi).